The following is an 89-amino-acid chain: UPF0335 protein CCNA_03428 (89 aa).

This sequence belongs to the UPF0335 family.

The protein is UPF0335 protein CCNA_03428 of Caulobacter vibrioides (strain NA1000 / CB15N) (Caulobacter crescentus).